The chain runs to 386 residues: N-acetylneuraminate epimerase (386 aa).

The signal sequence occupies residues 1 to 29 (MGMQMKNFKKMMTLMALCLSVAITTSGYA). Kelch repeat units follow at residues 51–95 (VIYV…VFLN), 97–149 (ELYV…VKLN), 151–186 (TMVLITGGVNEHIFDKYFIDIAAAAADESEKNKVIY), 187–232 (NYFN…VMEN), 235–284 (LMLI…LAGA), 306–355 (QNYT…SYGD), and 357–386 (VFLIGGENAKGKPVSSVTSFTMRDGNLLIK). The active-site Proton acceptor is Glu241.

This sequence belongs to the NanM family. In terms of assembly, homodimer.

It is found in the periplasm. The enzyme catalyses N-acetyl-alpha-neuraminate = N-acetyl-beta-neuraminate. In terms of biological role, converts alpha-N-acetylneuranimic acid (Neu5Ac) to the beta-anomer, accelerating the equilibrium between the alpha- and beta-anomers. Probably facilitates sialidase-negative bacteria to compete successfully for limited amounts of extracellular Neu5Ac, which is likely taken up in the beta-anomer. In addition, the rapid removal of sialic acid from solution might be advantageous to the bacterium to damp down host responses. In Salmonella choleraesuis (strain SC-B67), this protein is N-acetylneuraminate epimerase.